Consider the following 129-residue polypeptide: Gas vesicle protein C (129 aa).

Repeats lie at residues 19 to 51, 52 to 84, and 85 to 117; these read VTQL…LHQF, HQNL…LHKF, and HQNL…LQQF. The tract at residues 19–117 is 3 X 33 AA tandem repeats; it reads VTQLFRETHE…KAQSQYLQQF (99 aa).

Belongs to the gas vesicle GvpC family.

The protein localises to the gas vesicle. Confers stability, involved in shaping gas vesicles, hollow, gas filled proteinaceous nanostructures. During planktonic growth they allow positioning of the organism at a favorable depth for light or nutrient acquisition. Functionally, cluster expression in E.coli (gvpA1-gvpA2-gvpC-gvpN-gvpJ-gvpK-gvpF-gvpG-gvpV-gvpW) allows cells to float and produces irregularly shaped gas vesicles. This chain is Gas vesicle protein C, found in Nostoc sp. (strain PCC 7120 / SAG 25.82 / UTEX 2576).